A 431-amino-acid polypeptide reads, in one-letter code: Probable carboxylic ester hydrolase LipM (431 aa).

The next 3 helical transmembrane spans lie at 7–27, 38–58, and 75–95; these read IHVI…AATI, FASL…LPTL, and PVRA…LNLS. Active-site residues include Ser261, Asp357, and His390.

This sequence belongs to the 'GDXG' lipolytic enzyme family.

The protein localises to the membrane. The polypeptide is Probable carboxylic ester hydrolase LipM (Mycobacterium tuberculosis (strain ATCC 25618 / H37Rv)).